The primary structure comprises 278 residues: Probable malate dehydrogenase (278 aa).

The substrate site is built by Arg-51 and Arg-57. Residues Asn-64 and 87–89 (VSN) each bind NAD(+). Substrate is bound by residues Asn-89 and Arg-120. Catalysis depends on His-144, which acts as the Proton acceptor.

This sequence belongs to the LDH/MDH superfamily.

The enzyme catalyses (S)-malate + NAD(+) = oxaloacetate + NADH + H(+). Functionally, catalyzes the reversible oxidation of malate to oxaloacetate. In Pseudomonas putida (strain ATCC 47054 / DSM 6125 / CFBP 8728 / NCIMB 11950 / KT2440), this protein is Probable malate dehydrogenase (mdh).